The sequence spans 239 residues: Homeobox protein Nkx-2.8 (239 aa).

The span at 1-11 shows a compositional bias: polar residues; sequence MATSGRLSFTV. A disordered region spans residues 1–87; it reads MATSGRLSFT…GSDAEKRKKR (87 aa). The segment covering 21–32 has biased composition (basic and acidic residues); the sequence is DAQHLPRREPEP. Positions 62–79 are enriched in low complexity; it reads SPPDSSQRPSARPASPGS. A DNA-binding region (homeobox) is located at residues 84–143; that stretch reads RKKRRVLFSKAQTLELERRFRQQRYLSAPEREQLASLLRLTPTQVKIWFQNHRYKLKRAR.

The protein belongs to the NK-2 homeobox family.

It localises to the nucleus. The chain is Homeobox protein Nkx-2.8 (NKX2-8) from Homo sapiens (Human).